A 283-amino-acid polypeptide reads, in one-letter code: Urease accessory protein UreD (283 aa).

The protein belongs to the UreD family. In terms of assembly, ureD, UreF and UreG form a complex that acts as a GTP-hydrolysis-dependent molecular chaperone, activating the urease apoprotein by helping to assemble the nickel containing metallocenter of UreC. The UreE protein probably delivers the nickel.

It localises to the cytoplasm. In terms of biological role, required for maturation of urease via the functional incorporation of the urease nickel metallocenter. The polypeptide is Urease accessory protein UreD (Acaryochloris marina (strain MBIC 11017)).